The chain runs to 191 residues: Molybdenum cofactor guanylyltransferase (191 aa).

Residues 11 to 13 (LCG), K23, D66, and D97 contribute to the GTP site. A Mg(2+)-binding site is contributed by D97.

The protein belongs to the MobA family. Monomer. Mg(2+) serves as cofactor.

It is found in the cytoplasm. The enzyme catalyses Mo-molybdopterin + GTP + H(+) = Mo-molybdopterin guanine dinucleotide + diphosphate. Functionally, transfers a GMP moiety from GTP to Mo-molybdopterin (Mo-MPT) cofactor (Moco or molybdenum cofactor) to form Mo-molybdopterin guanine dinucleotide (Mo-MGD) cofactor. This Campylobacter jejuni subsp. jejuni serotype O:2 (strain ATCC 700819 / NCTC 11168) protein is Molybdenum cofactor guanylyltransferase.